The chain runs to 154 residues: OCIA domain-containing protein 2 (154 aa).

Residues 1 to 23 are disordered; that stretch reads MASVSTHENQEKGPHLPPPSKQS. An OCIA domain is found at 1-120; the sequence is MASVSTHENQ…HSFEGQLRGA (120 aa). At lysine 41 the chain carries N6-acetyllysine.

As to quaternary structure, interacts (via OCIA domain) with OCIAD1/ASRIJ and STAT3.

Its subcellular location is the endosome. It is found in the mitochondrion. The protein resides in the mitochondrion inner membrane. In terms of biological role, has an essential role in the assembly of mitochondrial respiratory chain complex III. Is also required for STAT3 activation and plays a role in cell migration. This is OCIA domain-containing protein 2 (OCIAD2) from Bos taurus (Bovine).